A 616-amino-acid polypeptide reads, in one-letter code: Centrosomal protein of 70 kDa (616 aa).

Coiled-coil stretches lie at residues E96–R210 and N273–L335. One copy of the TPR repeat lies at N502–S535.

Directly interacts with tubulin-gamma; this interaction determines centrosomal localization.

The protein localises to the cytoplasm. It is found in the cytoskeleton. The protein resides in the microtubule organizing center. Its subcellular location is the centrosome. Functionally, plays a role in the organization of both preexisting and nascent microtubules in interphase cells. During mitosis, required for the organization and orientation of the mitotic spindle. The chain is Centrosomal protein of 70 kDa (Cep70) from Mus musculus (Mouse).